Reading from the N-terminus, the 413-residue chain is S-adenosylmethionine synthase (413 aa).

Histidine 15 is a binding site for ATP. Position 17 (aspartate 17) interacts with Mg(2+). Residue glutamate 43 coordinates K(+). The L-methionine site is built by glutamate 56 and glutamine 100. The segment at 100–110 (QSPDISQGVND) is flexible loop. Residues 171–173 (DGK), 248–249 (KF), aspartate 257, 263–264 (RK), alanine 280, and lysine 284 each bind ATP. Residue aspartate 257 participates in L-methionine binding. Lysine 288 is an L-methionine binding site.

This sequence belongs to the AdoMet synthase family. In terms of assembly, homotetramer; dimer of dimers. Mg(2+) is required as a cofactor. Requires K(+) as cofactor.

The protein localises to the cytoplasm. The enzyme catalyses L-methionine + ATP + H2O = S-adenosyl-L-methionine + phosphate + diphosphate. The protein operates within amino-acid biosynthesis; S-adenosyl-L-methionine biosynthesis; S-adenosyl-L-methionine from L-methionine: step 1/1. Functionally, catalyzes the formation of S-adenosylmethionine (AdoMet) from methionine and ATP. The overall synthetic reaction is composed of two sequential steps, AdoMet formation and the subsequent tripolyphosphate hydrolysis which occurs prior to release of AdoMet from the enzyme. The chain is S-adenosylmethionine synthase from Prochlorococcus marinus (strain MIT 9301).